Reading from the N-terminus, the 291-residue chain is Acetyl-coenzyme A carboxylase carboxyl transferase subunit beta (291 aa).

One can recognise a CoA carboxyltransferase N-terminal domain in the interval 36-291 (MWVKCDGCGK…KILVIHGRGN (256 aa)). Zn(2+) contacts are provided by cysteine 40, cysteine 43, cysteine 59, and cysteine 62. The segment at 40-62 (CDGCGKVLYKNDMEKNNKVCYHC) adopts a C4-type zinc-finger fold.

Belongs to the AccD/PCCB family. Acetyl-CoA carboxylase is a heterohexamer composed of biotin carboxyl carrier protein (AccB), biotin carboxylase (AccC) and two subunits each of ACCase subunit alpha (AccA) and ACCase subunit beta (AccD). It depends on Zn(2+) as a cofactor.

The protein resides in the cytoplasm. The catalysed reaction is N(6)-carboxybiotinyl-L-lysyl-[protein] + acetyl-CoA = N(6)-biotinyl-L-lysyl-[protein] + malonyl-CoA. Its pathway is lipid metabolism; malonyl-CoA biosynthesis; malonyl-CoA from acetyl-CoA: step 1/1. In terms of biological role, component of the acetyl coenzyme A carboxylase (ACC) complex. Biotin carboxylase (BC) catalyzes the carboxylation of biotin on its carrier protein (BCCP) and then the CO(2) group is transferred by the transcarboxylase to acetyl-CoA to form malonyl-CoA. This chain is Acetyl-coenzyme A carboxylase carboxyl transferase subunit beta, found in Clostridium kluyveri (strain NBRC 12016).